Consider the following 475-residue polypeptide: Chromosomal replication initiator protein DnaA (475 aa).

The interval 1 to 73 (MSDIEQERWS…LACWQAELPD (73 aa)) is domain I, interacts with DnaA modulators. The domain II stretch occupies residues 73 to 131 (DVHRIDLMVRSAMRCAAPAKEAPAADPRRPEHGDGRASTELKMVATAPASANHDALGGS). Positions 132–354 (PLDPRLTFAS…GAINRLLAHS (223 aa)) are domain III, AAA+ region. ATP-binding residues include Gly-179, Gly-181, Lys-182, and Thr-183. Positions 355–475 (KLNAQPVTLE…VELLKRQLQE (121 aa)) are domain IV, binds dsDNA.

Belongs to the DnaA family. In terms of assembly, oligomerizes as a right-handed, spiral filament on DNA at oriC.

It localises to the cytoplasm. Plays an essential role in the initiation and regulation of chromosomal replication. ATP-DnaA binds to the origin of replication (oriC) to initiate formation of the DNA replication initiation complex once per cell cycle. Binds the DnaA box (a 9 base pair repeat at the origin) and separates the double-stranded (ds)DNA. Forms a right-handed helical filament on oriC DNA; dsDNA binds to the exterior of the filament while single-stranded (ss)DNA is stabiized in the filament's interior. The ATP-DnaA-oriC complex binds and stabilizes one strand of the AT-rich DNA unwinding element (DUE), permitting loading of DNA polymerase. After initiation quickly degrades to an ADP-DnaA complex that is not apt for DNA replication. Binds acidic phospholipids. This Nitrobacter hamburgensis (strain DSM 10229 / NCIMB 13809 / X14) protein is Chromosomal replication initiator protein DnaA.